The chain runs to 368 residues: N-acetylneuraminate epimerase (368 aa).

Residues 1–19 form the signal peptide; sequence MNKTITALAIMMASFAANA. Kelch repeat units lie at residues 40 to 84, 86 to 137, 139 to 173, 174 to 219, 222 to 265, 287 to 336, and 338 to 367; these read TVYI…AFID, NLYV…FVHN, KAYV…KINA, HYFD…VNKG, TWLI…VAGG, ENYQ…PWNN, and LLII…VTVQ. Glu228 (proton acceptor) is an active-site residue.

This sequence belongs to the NanM family. As to quaternary structure, homodimer.

Its subcellular location is the periplasm. It catalyses the reaction N-acetyl-alpha-neuraminate = N-acetyl-beta-neuraminate. In terms of biological role, converts alpha-N-acetylneuranimic acid (Neu5Ac) to the beta-anomer, accelerating the equilibrium between the alpha- and beta-anomers. Probably facilitates sialidase-negative bacteria to compete successfully for limited amounts of extracellular Neu5Ac, which is likely taken up in the beta-anomer. In addition, the rapid removal of sialic acid from solution might be advantageous to the bacterium to damp down host responses. In Escherichia coli O9:H4 (strain HS), this protein is N-acetylneuraminate epimerase.